Consider the following 225-residue polypeptide: Urease subunit alpha (225 aa).

Residues 1–102 (MRLTPKELDK…LVTIHNPIED (102 aa)) are urease gamma. The segment at 103–225 (NGKLTPGEYI…ANAAQKHFIH (123 aa)) is urease beta.

The protein in the N-terminal section; belongs to the urease gamma subunit family. It in the C-terminal section; belongs to the urease beta subunit family. In terms of assembly, heterohexamer of 3 UreA (alpha) and 3 UreB (beta) subunits.

The protein localises to the cytoplasm. The catalysed reaction is urea + 2 H2O + H(+) = hydrogencarbonate + 2 NH4(+). The protein operates within nitrogen metabolism; urea degradation; CO(2) and NH(3) from urea (urease route): step 1/1. The protein is Urease subunit alpha of Helicobacter hepaticus (strain ATCC 51449 / 3B1).